We begin with the raw amino-acid sequence, 107 residues long: Death-associated protein-like 1 (107 aa).

Residues 1–23 are disordered; that stretch reads MANEVQDLLSPRKGGHPPAVKAG.

Expressed in hair follicle (at protein level).

Its function is as follows. May play a role in the early stages of epithelial differentiation or in apoptosis. The protein is Death-associated protein-like 1 (DAPL1) of Homo sapiens (Human).